We begin with the raw amino-acid sequence, 596 residues long: Transcription factor IIIB 70 kDa subunit (596 aa).

The segment at 1–33 (MPVCKNCHGTEFERDLSNANNDLVCKACGVVSE) adopts a TFIIB-type zinc-finger fold. Zn(2+) contacts are provided by C4, C7, C25, and C28. A run of 2 repeats spans residues 90-166 (VSYA…KMVK) and 185-264 (FAEK…EFKN). 2 disordered regions span residues 363–421 (GENI…NESG) and 509–534 (IATGNTSVKKKRTRRRNNTRSDEPTK). Residues 365-375 (NIYHEGSENET) show a composition bias toward basic and acidic residues. S381 and S384 each carry phosphoserine. Residues 388–421 (EHVEGEDKETEGTEEKVKKVKTKTSEEKKENESG) are compositionally biased toward basic and acidic residues. The span at 516–526 (VKKKRTRRRNN) shows a compositional bias: basic residues.

It belongs to the TFIIB family. In terms of assembly, TFIIIB comprises the TATA-binding protein (TBP), the B-related factor (BRF) and the B' component (TFC5).

It localises to the nucleus. Functionally, general activator of RNA polymerase III transcription. Interacts with TBP. Binds to Pol III subunit C34 and to the TAU135 component of TFIIIC. This Saccharomyces cerevisiae (strain ATCC 204508 / S288c) (Baker's yeast) protein is Transcription factor IIIB 70 kDa subunit (BRF1).